We begin with the raw amino-acid sequence, 510 residues long: Major facilitator superfamily domain-containing protein 4A (510 aa).

The next 12 membrane-spanning stretches (helical) occupy residues 19 to 39 (LTYW…GPTL), 53 to 73 (ISWV…LGGV), 82 to 102 (LWAL…IPFC), 107 to 127 (VLAS…TVAN), 139 to 159 (AFFL…SPLI), 218 to 238 (YAFW…LFLL), 303 to 323 (FFAI…MMGA), 345 to 365 (GYLP…SIPV), 380 to 400 (VGVV…IFLF), 401 to 421 (VGTA…LAYT), 434 to 454 (VLVT…GLIF), and 462 to 482 (FLVC…LLLF).

Belongs to the major facilitator superfamily.

Its subcellular location is the membrane. This chain is Major facilitator superfamily domain-containing protein 4A, found in Mus musculus (Mouse).